Reading from the N-terminus, the 295-residue chain is Methionine aminopeptidase (295 aa).

His-62 contacts substrate. Residues Asp-82, Asp-93, and His-153 each contribute to the a divalent metal cation site. Substrate is bound at residue His-161. Glu-187 and Glu-280 together coordinate a divalent metal cation.

Monomer. Co(2+) serves as cofactor. Zn(2+) is required as a cofactor. The cofactor is Mn(2+). Requires Fe(2+) as cofactor.

The enzyme catalyses Release of N-terminal amino acids, preferentially methionine, from peptides and arylamides.. Functionally, removes the N-terminal methionine from nascent proteins. The N-terminal methionine is often cleaved when the second residue in the primary sequence is small and uncharged (Met-Ala-, Cys, Gly, Pro, Ser, Thr, or Val). The protein is Methionine aminopeptidase of Pyrococcus furiosus (strain ATCC 43587 / DSM 3638 / JCM 8422 / Vc1).